A 427-amino-acid chain; its full sequence is Glutamate-1-semialdehyde 2,1-aminomutase (427 aa).

N6-(pyridoxal phosphate)lysine is present on Lys267.

It belongs to the class-III pyridoxal-phosphate-dependent aminotransferase family. HemL subfamily. Homodimer. It depends on pyridoxal 5'-phosphate as a cofactor.

It localises to the cytoplasm. It catalyses the reaction (S)-4-amino-5-oxopentanoate = 5-aminolevulinate. The protein operates within porphyrin-containing compound metabolism; protoporphyrin-IX biosynthesis; 5-aminolevulinate from L-glutamyl-tRNA(Glu): step 2/2. This Citrifermentans bemidjiense (strain ATCC BAA-1014 / DSM 16622 / JCM 12645 / Bem) (Geobacter bemidjiensis) protein is Glutamate-1-semialdehyde 2,1-aminomutase.